A 712-amino-acid chain; its full sequence is Rap1 GTPase-activating protein 2 (712 aa).

Residues 1 to 33 are disordered; that stretch reads MLAGLKVKKQELANSSDVTLPDRPLSPPLTAPP. Position 26 is a phosphoserine (Ser-26). Thr-30 bears the Phosphothreonine mark. In terms of domain architecture, Rap-GAP spans 229–445; it reads IVSYDEHDVN…RTRAALLDNL (217 aa). Phosphoserine occurs at positions 488, 495, 525, 539, 545, 593, and 594. Residues 529 to 712 form a disordered region; it reads AAATAKNQSR…LSHASSSAGH (184 aa). Over residues 566–594 the composition is skewed to polar residues; sequence DSASSTPKTPDGGHSSQEIKSETSSNPSS. Basic and acidic residues predominate over residues 599–612; it reads PNKEKPFIKLKENG. A compositionally biased stretch (low complexity) spans 617–629; that stretch reads SRSSSSTSSFSST. Residues 641 to 652 show a composition bias toward polar residues; the sequence is SGSSQPSTTSPF. Residues 660 to 669 are compositionally biased toward low complexity; the sequence is SPSPSSESPS. Polar residues predominate over residues 681–694; it reads RSPTDAKSRNSPRS.

It localises to the cytoplasm. Its function is as follows. GTPase activator for the nuclear Ras-related regulatory protein RAP-1A (KREV-1), converting it to the putatively inactive GDP-bound state. This chain is Rap1 GTPase-activating protein 2 (Rap1gap2), found in Mus musculus (Mouse).